The chain runs to 495 residues: Growth/differentiation factor 5 (495 aa).

The first 27 residues, 1-27 (MRLPKLLTLLLWHLAWLDLELICTVLG), serve as a signal peptide directing secretion. Positions 28–375 (APDLGQRTPG…YLFSQRRKRR (348 aa)) are excised as a propeptide. The segment at 30 to 162 (DLGQRTPGAK…KEPFRPPPIT (133 aa)) is disordered. Positions 124–137 (GGKASSKAGSAPSS) are enriched in low complexity. The span at 142–156 (KTREPGTPREPKEPF) shows a compositional bias: basic and acidic residues. The N-linked (GlcNAc...) asparagine glycan is linked to Asn183. 3 cysteine pairs are disulfide-bonded: Cys394–Cys460, Cys423–Cys492, and Cys427–Cys494.

The protein belongs to the TGF-beta family. Homodimer; disulfide-linked. Interacts with serine proteases, HTRA1 and HTRA3. Following LPS binding, may form a complex with CXCR4, HSP90AA1 and HSPA8. Interacts with high affinity with NOG; inhibits chondrogenesis. Interacts with high affinity with BMPR1B and lower affinity with BMPR1A; positively regulates chondrocyte differentiation and induces SMAD-dependent signaling. Interacts with FBN1 (via N-terminal domain) and FBN2. Interacts with TGFBR3.

The protein resides in the secreted. It localises to the cell membrane. In terms of biological role, growth factor involved in bone and cartilage formation. During cartilage development regulates differentiation of chondrogenic tissue through two pathways. Firstly, positively regulates differentiation of chondrogenic tissue through its binding of high affinity with BMPR1B and of less affinity with BMPR1A, leading to induction of SMAD1-SMAD5-SMAD8 complex phosphorylation and then SMAD protein signaling transduction. Secondly, negatively regulates chondrogenic differentiation through its interaction with NOG. Required to prevent excessive muscle loss upon denervation. This function requires SMAD4 and is mediated by phosphorylated SMAD1/5/8. Binds bacterial lipopolysaccharide (LPS) and mediates LPS-induced inflammatory response, including TNF secretion by monocytes. The polypeptide is Growth/differentiation factor 5 (Gdf5) (Mus musculus (Mouse)).